The sequence spans 445 residues: Phosphoglucosamine mutase (445 aa).

The active-site Phosphoserine intermediate is serine 102. The Mg(2+) site is built by serine 102, aspartate 241, aspartate 243, and aspartate 245. Serine 102 bears the Phosphoserine mark.

The protein belongs to the phosphohexose mutase family. Mg(2+) is required as a cofactor. Activated by phosphorylation.

The catalysed reaction is alpha-D-glucosamine 1-phosphate = D-glucosamine 6-phosphate. Catalyzes the conversion of glucosamine-6-phosphate to glucosamine-1-phosphate. This is Phosphoglucosamine mutase from Salmonella paratyphi A (strain ATCC 9150 / SARB42).